The following is a 349-amino-acid chain: Anthranilate phosphoribosyltransferase (349 aa).

Residues glycine 82, 85–86 (GD), 92–95 (NVST), 110–118 (KHGNRGVSS), and serine 122 each bind 5-phospho-alpha-D-ribose 1-diphosphate. Glycine 82 serves as a coordination point for anthranilate. Serine 94 serves as a coordination point for Mg(2+). Residue asparagine 113 participates in anthranilate binding. Arginine 168 provides a ligand contact to anthranilate. Positions 227 and 228 each coordinate Mg(2+).

Belongs to the anthranilate phosphoribosyltransferase family. As to quaternary structure, homodimer. The cofactor is Mg(2+).

It catalyses the reaction N-(5-phospho-beta-D-ribosyl)anthranilate + diphosphate = 5-phospho-alpha-D-ribose 1-diphosphate + anthranilate. It functions in the pathway amino-acid biosynthesis; L-tryptophan biosynthesis; L-tryptophan from chorismate: step 2/5. Its function is as follows. Catalyzes the transfer of the phosphoribosyl group of 5-phosphorylribose-1-pyrophosphate (PRPP) to anthranilate to yield N-(5'-phosphoribosyl)-anthranilate (PRA). This Acinetobacter baylyi (strain ATCC 33305 / BD413 / ADP1) protein is Anthranilate phosphoribosyltransferase.